We begin with the raw amino-acid sequence, 375 residues long: Meiotic driver cw27 (375 aa).

Disordered stretches follow at residues 1–42 (MKNK…STLP) and 74–103 (DYDENRLLITDEGNNPPNTHRENHSSGTTD). The segment covering 11–29 (SMDELSTKNDNEIDLEKGP) has biased composition (basic and acidic residues). A run of 7 helical transmembrane segments spans residues 108–128 (FLIKLLISFTSIILFNAPAVC), 145–165 (WTLIGFWCASSLIIFTFSWCF), 172–192 (AVKVTVIFLAQCIKVTAISLA), 208–228 (EMMIIIWILWLIICCILFGCV), 245–265 (TISAVLFLIVSSVCIPIWTLW), 272–292 (LQVLGIHGIIALLVNGLMSLF), and 336–356 (VIGFILGGIANAIGGIANAIG).

The protein belongs to the WTF family. As to quaternary structure, homomer. Forms protein aggregates. The two isoforms can interact with each other and with themselves. High sequence similarity is required for their interaction.

It localises to the spore membrane. The protein resides in the vacuole. It is found in the membrane. The protein localises to the ascus epiplasm. Its subcellular location is the cytoplasm. It localises to the endoplasmic reticulum. Promotes unequal transmission of alleles from the parental zygote to progeny spores by acting as poison/antidote system where the poison and antidote proteins are produced from the same locus; the poison component is trans-acting and targets all spores within an ascus whereas the antidote component is spore-specific, leading to poisoning of all progeny that do not inherit the allele. In terms of biological role, localizes isoform 2 to the vacuole thereby facilitating its degradation. Functionally, forms toxic aggregates that disrupt spore maturation. The protein is Meiotic driver cw27 of Schizosaccharomyces pombe (Fission yeast).